Reading from the N-terminus, the 559-residue chain is Actin-binding protein WASF1 (559 aa).

3 disordered regions span residues 170-202 (EDKR…DRRR), 304-383 (IENR…GVLH), and 412-490 (VHPL…HPST). Over residues 182-202 (KNLDRPHEPEKVPRAPHDRRR) the composition is skewed to basic and acidic residues. A compositionally biased stretch (polar residues) spans 304–313 (IENRPQSPAT). Residues 322–332 (PTPPPPPPPLP) show a composition bias toward pro residues. Residues 333–346 (SALSTSSLRASMTS) are compositionally biased toward low complexity. Arg-341 is subject to Asymmetric dimethylarginine; alternate. Arg-341 carries the omega-N-methylarginine; alternate modification. Pro residues-rich tracts occupy residues 347 to 360 (TPPP…PPPA), 423 to 437 (LPPP…PPGI), and 460 to 477 (STAP…PPSQ). Ser-489 carries the post-translational modification Phosphoserine. A WH2 domain is found at 497-514 (ARSVLLEAIRKGIQLRKV).

The protein belongs to the SCAR/WAVE family. In terms of assembly, component of the WAVE1 complex composed of ABI2, CYFIP1 or CYFIP2, BRK1, NCKAP1 and WASF1/WAVE1. Within the complex, a heterodimer containing NCKAP1 and CYFIP1 interacts with a heterotrimer formed by WAVE1, ABI2 and BRK1. CYFIP2 binds to activated RAC1 which causes the complex to dissociate, releasing activated WASF1. The complex can also be activated by NCK1. Binds actin and the Arp2/3 complex. Interacts with BAIAP2. Interacts with SHANK3; the interaction mediates the association of SHANK3 with the WAVE1 complex. Interacts with ABI1 (via N-terminus). Interacts with SORBS2; this interaction greatly enhances phosphorylation by ABL1 and dephosphorylation by PTPN12 and might mediate partial to focal adhesion sites.

Its subcellular location is the cytoplasm. It is found in the cytoskeleton. The protein localises to the synapse. It localises to the cell junction. The protein resides in the focal adhesion. Its function is as follows. Downstream effector molecule involved in the transmission of signals from tyrosine kinase receptors and small GTPases to the actin cytoskeleton. Promotes formation of actin filaments. Part of the WAVE complex that regulates lamellipodia formation. The WAVE complex regulates actin filament reorganization via its interaction with the Arp2/3 complex. As component of the WAVE1 complex, required for BDNF-NTRK2 endocytic trafficking and signaling from early endosomes. Also involved in the regulation of mitochondrial dynamics. This is Actin-binding protein WASF1 (WASF1) from Pongo abelii (Sumatran orangutan).